The following is a 597-amino-acid chain: MLSLLSSEIFFSAIQYNLSLMEEVRLKKLQELREKGINPYPYRFEVTDFIGNIRKQYEEEPPENYKVRVKGVAKRVSRTENGYMVRLADEKGIEILVFTKEEGLKPKESYTFEGILKRVEGKLSLVEAVLTEEEGEEVYKIKEQFDYDPNFRPVSLAGRLVSMRSMGKAIFGHIQDLTGKIQIYLKKDVIGEEKLKFFNDYIDVGDIVGVRGKLFRTNTGELTVEVEEYQLLAKSLHPLPEKWHGLKDVEVRYRQRYLDLIANPEARRIFMLRTKLITEMRKFFEMHGFIEVETPILQPIASGANARPFVTYHNFLETELYLRIAPELYLKRLIVGGFPRVYEIGKNFRNESVDRTHNPEFTMVEFYAAYWDYHDLIKFTEDMFVYLLEKTLGTLKVKYGEWELDFSPPFKKVRYFDLLKEKTGKDKDFFLKDLEGLRKLAKELEIPDVERMTHAKLLDKVFEKVAEEDLIQPTFVIDFPKILSPLAKTHREDPDLVERFELIIARYEVANAYTELNDPFDQKERFLEQLKEKQMGDEEAMDMDEDFIRALEYGMPPTAGEGIGIDRLVMILANTDSIREVILFPQLKPEKKKKEAP.

E501 and E508 together coordinate Mg(2+).

The protein belongs to the class-II aminoacyl-tRNA synthetase family. In terms of assembly, homodimer. Requires Mg(2+) as cofactor.

Its subcellular location is the cytoplasm. It catalyses the reaction tRNA(Lys) + L-lysine + ATP = L-lysyl-tRNA(Lys) + AMP + diphosphate. In Aquifex aeolicus (strain VF5), this protein is Lysine--tRNA ligase (lysS).